Reading from the N-terminus, the 100-residue chain is Small ribosomal subunit protein uS14m (100 aa).

The protein belongs to the universal ribosomal protein uS14 family.

Its subcellular location is the mitochondrion. In Vicia faba (Broad bean), this protein is Small ribosomal subunit protein uS14m (RPS14).